A 417-amino-acid polypeptide reads, in one-letter code: Serine--tRNA ligase (417 aa).

Residue 232-234 (TAE) coordinates L-serine. 263–265 (RKE) contributes to the ATP binding site. L-serine is bound at residue E286. Position 350–353 (350–353 (EISS)) interacts with ATP. S385 is an L-serine binding site.

It belongs to the class-II aminoacyl-tRNA synthetase family. Type-1 seryl-tRNA synthetase subfamily. As to quaternary structure, homodimer. The tRNA molecule binds across the dimer.

It localises to the cytoplasm. It carries out the reaction tRNA(Ser) + L-serine + ATP = L-seryl-tRNA(Ser) + AMP + diphosphate + H(+). It catalyses the reaction tRNA(Sec) + L-serine + ATP = L-seryl-tRNA(Sec) + AMP + diphosphate + H(+). Its pathway is aminoacyl-tRNA biosynthesis; selenocysteinyl-tRNA(Sec) biosynthesis; L-seryl-tRNA(Sec) from L-serine and tRNA(Sec): step 1/1. Catalyzes the attachment of serine to tRNA(Ser). Is also able to aminoacylate tRNA(Sec) with serine, to form the misacylated tRNA L-seryl-tRNA(Sec), which will be further converted into selenocysteinyl-tRNA(Sec). The protein is Serine--tRNA ligase of Sulfurihydrogenibium sp. (strain YO3AOP1).